A 93-amino-acid chain; its full sequence is Small ribosomal subunit protein uS19 (93 aa).

This sequence belongs to the universal ribosomal protein uS19 family.

In terms of biological role, protein S19 forms a complex with S13 that binds strongly to the 16S ribosomal RNA. In Lactobacillus helveticus (strain DPC 4571), this protein is Small ribosomal subunit protein uS19.